The primary structure comprises 305 residues: uncharacterized protein (305 aa).

The segment at 53–185 (SGRIGDGDDG…TGPRSSRTVG (133 aa)) is disordered. 2 stretches are compositionally biased toward basic and acidic residues: residues 95–116 (VEERNLVDRCNRMMNETEERPT) and 128–142 (GSERNGETERPRSEG). The segment covering 161–171 (GNTQAPSQSAE) has biased composition (polar residues). Residues 260 to 302 (CAICMSNFIKNQRLRVLPCDHRFHVGCVDKWLLGHSNKCPVCR) form an RING-type; atypical zinc finger.

This is an uncharacterized protein from Encephalitozoon cuniculi (strain GB-M1) (Microsporidian parasite).